We begin with the raw amino-acid sequence, 622 residues long: Iron transport multicopper oxidase fio1 (622 aa).

The signal sequence occupies residues 1–22 (MNKFFSFPILGLLLTCVRFVVA). The Extracellular segment spans residues 23 to 553 (KERLFEWNVT…GEMPAGWTSK (531 aa)). N30 and N79 each carry an N-linked (GlcNAc...) asparagine glycan. 2 consecutive Plastocyanin-like domains span residues 49–147 (IGVN…FIIN) and 194–304 (TGLF…LSYN). Residues H85 and H87 each contribute to the Cu cation site. Residues N117 and N123 are each glycosylated (N-linked (GlcNAc...) asparagine). Cu cation contacts are provided by H129 and H131. 8 N-linked (GlcNAc...) asparagine glycosylation sites follow: N198, N202, N234, N269, N296, N338, N360, and N376. In terms of domain architecture, Plastocyanin-like 3 spans 386–498 (EPVTYGPYTN…SGLLATFIEA (113 aa)). The Cu cation site is built by H417, H420, H422, H480, C481, H482, and H486. The N-linked (GlcNAc...) asparagine glycan is linked to N532. A helical membrane pass occupies residues 554 to 574 (AIGTMAACVISACIGMGSIIF). At 575 to 622 (YGASIHPVPTEELDENDDLQEAALENAAMFLDTDKAVEKVVEGKDEIK) the chain is on the cytoplasmic side.

Belongs to the multicopper oxidase family. It depends on Cu cation as a cofactor.

The protein resides in the cell membrane. In terms of biological role, could be an iron transport multicopper oxidase, which is required for Fe(2+) high affinity uptake. May be required to oxidize Fe(2+) and release it from the transporter. Essential component of copper-dependent iron transport. The polypeptide is Iron transport multicopper oxidase fio1 (fio1) (Schizosaccharomyces pombe (strain 972 / ATCC 24843) (Fission yeast)).